Consider the following 191-residue polypeptide: Ubiquinol-cytochrome c reductase iron-sulfur subunit (191 aa).

The chain crosses the membrane as a helical span at residues 18–35; it reads ATAATGVVVTGAAVWPLI. Residues 94–189 enclose the Rieske domain; the sequence is RDTSAENANK…AAFVDETTIK (96 aa). Positions 95-116 are disordered; sequence DTSAENANKPGAEATDENRTLP. Positions 133, 135, 153, and 156 each coordinate [2Fe-2S] cluster. A disulfide bond links Cys-138 and Cys-155.

Belongs to the Rieske iron-sulfur protein family. The main subunits of complex b-c1 are: cytochrome b, cytochrome c1 and the Rieske protein. [2Fe-2S] cluster is required as a cofactor.

Its subcellular location is the cell membrane. It catalyses the reaction a quinol + 2 Fe(III)-[cytochrome c](out) = a quinone + 2 Fe(II)-[cytochrome c](out) + 2 H(+)(out). Its function is as follows. Component of the ubiquinol-cytochrome c reductase complex (complex III or cytochrome b-c1 complex), which is a respiratory chain that generates an electrochemical potential coupled to ATP synthesis. This Rhodobacter capsulatus (strain ATCC BAA-309 / NBRC 16581 / SB1003) protein is Ubiquinol-cytochrome c reductase iron-sulfur subunit (petA).